We begin with the raw amino-acid sequence, 156 residues long: Small ribosomal subunit protein uS7 (156 aa).

Belongs to the universal ribosomal protein uS7 family. In terms of assembly, part of the 30S ribosomal subunit. Contacts proteins S9 and S11.

Its function is as follows. One of the primary rRNA binding proteins, it binds directly to 16S rRNA where it nucleates assembly of the head domain of the 30S subunit. Is located at the subunit interface close to the decoding center, probably blocks exit of the E-site tRNA. This is Small ribosomal subunit protein uS7 from Exiguobacterium sibiricum (strain DSM 17290 / CCUG 55495 / CIP 109462 / JCM 13490 / 255-15).